Consider the following 653-residue polypeptide: Macrolide export ATP-binding/permease protein MacB (653 aa).

The 239-residue stretch at 6 to 244 (LALSHICREF…AAASLPADKP (239 aa)) folds into the ABC transporter domain. Residue 42–49 (GSSGSGKS) coordinates ATP. The next 4 membrane-spanning stretches (helical) occupy residues 277–297 (FLTM…VALG), 526–546 (LAFL…IGVM), 587–607 (LGGI…NLLL), and 617–637 (FSIG…GYFP).

It belongs to the ABC transporter superfamily. Macrolide exporter (TC 3.A.1.122) family. Homodimer.

It localises to the cell inner membrane. In terms of biological role, non-canonical ABC transporter that contains transmembrane domains (TMD), which form a pore in the inner membrane, and an ATP-binding domain (NBD), which is responsible for energy generation. Confers resistance against macrolides. The chain is Macrolide export ATP-binding/permease protein MacB from Bradyrhizobium diazoefficiens (strain JCM 10833 / BCRC 13528 / IAM 13628 / NBRC 14792 / USDA 110).